Reading from the N-terminus, the 460-residue chain is Phosphoglucomutase (460 aa).

Serine 103 functions as the Phosphoserine intermediate in the catalytic mechanism. Serine 103 is a Mg(2+) binding site. Residues serine 103–histidine 104 and lysine 113 contribute to the substrate site. Aspartate 239, aspartate 241, and aspartate 243 together coordinate Mg(2+). Residues aspartate 243 to arginine 244, threonine 303, and glutamate 322 to serine 324 contribute to the substrate site.

Belongs to the phosphohexose mutase family. Requires Mg(2+) as cofactor.

The protein resides in the cytoplasm. The enzyme catalyses alpha-D-glucose 1-phosphate = alpha-D-glucose 6-phosphate. Functionally, this enzyme participates in both the breakdown and synthesis of glucose. This Neisseria gonorrhoeae protein is Phosphoglucomutase (pgm).